We begin with the raw amino-acid sequence, 391 residues long: Phosphoglycerate kinase (391 aa).

Residues aspartate 21–asparagine 23, arginine 36, histidine 59–arginine 62, arginine 113, and arginine 146 contribute to the substrate site. ATP-binding positions include lysine 197, glutamate 319, and glycine 345 to threonine 348.

The protein belongs to the phosphoglycerate kinase family. In terms of assembly, monomer.

It localises to the cytoplasm. The catalysed reaction is (2R)-3-phosphoglycerate + ATP = (2R)-3-phospho-glyceroyl phosphate + ADP. It functions in the pathway carbohydrate degradation; glycolysis; pyruvate from D-glyceraldehyde 3-phosphate: step 2/5. In Shewanella sediminis (strain HAW-EB3), this protein is Phosphoglycerate kinase.